Reading from the N-terminus, the 116-residue chain is Methionine-R-sulfoxide reductase B1 (116 aa).

In terms of domain architecture, MsrB spans Met1–Lys106. Zn(2+) is bound by residues Cys23, Cys26, Cys71, and Cys74. Sec95 serves as the catalytic Nucleophile. A non-standard amino acid (selenocysteine) is located at residue Sec95.

The protein belongs to the MsrB Met sulfoxide reductase family. Requires Zn(2+) as cofactor. Post-translationally, truncated MSRB1/SEPX1 proteins produced by failed UGA/Sec decoding are ubiquitinated by some Cul2-RING E3 ubiquitin-protein ligase complexes (containing either PRAME, PRAMF6, PRAMF9 or FEM1C as substrate-recognition component).

Its subcellular location is the cytoplasm. The protein resides in the nucleus. It localises to the cytoskeleton. The enzyme catalyses L-methionyl-[protein] + [thioredoxin]-disulfide + H2O = L-methionyl-(R)-S-oxide-[protein] + [thioredoxin]-dithiol. It catalyses the reaction [thioredoxin]-disulfide + L-methionine + H2O = L-methionine (R)-S-oxide + [thioredoxin]-dithiol. Methionine-sulfoxide reductase that specifically reduces methionine (R)-sulfoxide back to methionine. While in many cases, methionine oxidation is the result of random oxidation following oxidative stress, methionine oxidation is also a post-translational modification that takes place on specific residue. Acts as a regulator of actin assembly by reducing methionine (R)-sulfoxide mediated by MICALs (MICAL1, MICAL2 or MICAL3) on actin, thereby promoting filament repolymerization. Plays a role in innate immunity by reducing oxidized actin, leading to actin repolymerization in macrophages. The protein is Methionine-R-sulfoxide reductase B1 (MSRB1) of Homo sapiens (Human).